A 190-amino-acid polypeptide reads, in one-letter code: Probable nicotinate-nucleotide adenylyltransferase (190 aa).

This sequence belongs to the NadD family.

It catalyses the reaction nicotinate beta-D-ribonucleotide + ATP + H(+) = deamido-NAD(+) + diphosphate. Its pathway is cofactor biosynthesis; NAD(+) biosynthesis; deamido-NAD(+) from nicotinate D-ribonucleotide: step 1/1. Catalyzes the reversible adenylation of nicotinate mononucleotide (NaMN) to nicotinic acid adenine dinucleotide (NaAD). The polypeptide is Probable nicotinate-nucleotide adenylyltransferase (Frankia alni (strain DSM 45986 / CECT 9034 / ACN14a)).